The chain runs to 183 residues: Putative manganese efflux pump MntP (183 aa).

The next 6 membrane-spanning stretches (helical) occupy residues 8 to 28 (IIALSMMALALGMDAFSVALG), 40 to 60 (FYIGLTIGLFHILMPLAGMAV), 72 to 92 (ATYAGGALLLWLGGQMIIASF), 108 to 128 (LFFAFSVSLDSFSVGLSLGIF), 133 to 153 (MVTILLFGLFSMVLTWVGLFV), and 163 to 183 (SYSEALGGSILLAFGLKLLFL).

This sequence belongs to the MntP (TC 9.B.29) family.

The protein localises to the cell membrane. Its function is as follows. Probably functions as a manganese efflux pump. The protein is Putative manganese efflux pump MntP of Geobacillus kaustophilus (strain HTA426).